Reading from the N-terminus, the 392-residue chain is Rhizopuspepsin-5 (392 aa).

Residues 1–21 (MKFSLISSCVALAVLVLSTEA) form the signal peptide. The propeptide at 22 to 69 (APNGKKVNIPLTKNKDYKPNAKNAIQKVLAKYHRHRSTSSSSNSTSTD) is activation peptide. Positions 85-389 (YFGQVKVGTP…NPTVPQVQIA (305 aa)) constitute a Peptidase A1 domain. Residue Asp103 is part of the active site. A disulfide bridge links Cys116 with Cys119. Residue Asp286 is part of the active site. The cysteines at positions 320 and 353 are disulfide-linked.

The protein belongs to the peptidase A1 family.

It catalyses the reaction Hydrolysis of proteins with broad specificity similar to that of pepsin A, preferring hydrophobic residues at P1 and P1'. Clots milk and activates trypsinogen. Does not cleave 4-Gln-|-His-5, but does cleave 10-His-|-Leu-11 and 12-Val-|-Glu-13 in B chain of insulin.. The protein is Rhizopuspepsin-5 of Rhizopus niveus.